We begin with the raw amino-acid sequence, 589 residues long: Glutamine--fructose-6-phosphate aminotransferase [isomerizing] (589 aa).

Cysteine 2 serves as the catalytic Nucleophile; for GATase activity. Residues 2-221 (CGIIGIVSLR…DDELGFITPE (220 aa)) form the Glutamine amidotransferase type-2 domain. SIS domains are found at residues 286 to 426 (VIEE…KMEK) and 445 to 579 (IGEE…PDKP). Lysine 584 (for Fru-6P isomerization activity) is an active-site residue.

In terms of assembly, homodimer.

It is found in the cytoplasm. It catalyses the reaction D-fructose 6-phosphate + L-glutamine = D-glucosamine 6-phosphate + L-glutamate. Its function is as follows. Catalyzes the first step in hexosamine metabolism, converting fructose-6P into glucosamine-6P using glutamine as a nitrogen source. The polypeptide is Glutamine--fructose-6-phosphate aminotransferase [isomerizing] (Sulfurisphaera tokodaii (strain DSM 16993 / JCM 10545 / NBRC 100140 / 7) (Sulfolobus tokodaii)).